We begin with the raw amino-acid sequence, 252 residues long: Protein BTG3 (252 aa).

The segment at 138–163 (VTSDYHSGSSSSDEDTSKEVDVKPSS) is disordered.

It belongs to the BTG family. In terms of tissue distribution, ubiquitous.

Its function is as follows. Overexpression impairs serum-induced cell cycle progression from the G0/G1 to S phase. The sequence is that of Protein BTG3 (Btg3) from Mus musculus (Mouse).